The following is a 517-amino-acid chain: Putative ribose/galactose/methyl galactoside import ATP-binding protein 1 (517 aa).

2 consecutive ABC transporter domains span residues leucine 23–proline 258 and threonine 269–serine 515. Glycine 55–serine 62 is an ATP binding site.

Belongs to the ABC transporter superfamily. Carbohydrate importer 2 (CUT2) (TC 3.A.1.2) family.

It localises to the cell inner membrane. The enzyme catalyses D-ribose(out) + ATP + H2O = D-ribose(in) + ADP + phosphate + H(+). The catalysed reaction is D-galactose(out) + ATP + H2O = D-galactose(in) + ADP + phosphate + H(+). Part of an ABC transporter complex involved in carbohydrate import. Could be involved in ribose, galactose and/or methyl galactoside import. Responsible for energy coupling to the transport system. The chain is Putative ribose/galactose/methyl galactoside import ATP-binding protein 1 from Burkholderia ambifaria (strain ATCC BAA-244 / DSM 16087 / CCUG 44356 / LMG 19182 / AMMD) (Burkholderia cepacia (strain AMMD)).